The primary structure comprises 226 residues: DNA mismatch repair protein MutH (226 aa).

Belongs to the MutH family.

Its subcellular location is the cytoplasm. Functionally, sequence-specific endonuclease that cleaves unmethylated GATC sequences. It is involved in DNA mismatch repair. This Vibrio campbellii (strain ATCC BAA-1116) protein is DNA mismatch repair protein MutH.